Consider the following 231-residue polypeptide: 2-amino-5-formylamino-6-ribosylaminopyrimidin-4(3H)-one 5'-monophosphate deformylase (231 aa).

Glu-29, His-31, Asp-40, and His-110 together coordinate Fe cation.

It belongs to the creatininase superfamily. FAPy deformylase family. In terms of assembly, homodimer. It depends on Fe(2+) as a cofactor. Requires Zn(2+) as cofactor.

The enzyme catalyses 2-amino-5-formylamino-6-(5-phospho-D-ribosylamino)pyrimidin-4(3H)-one + H2O = 2,5-diamino-6-(1-D-ribosylamino)pyrimidin-4(3H)-one 5'-phosphate + formate + H(+). It participates in cofactor biosynthesis; coenzyme F420 biosynthesis. It functions in the pathway cofactor biosynthesis; riboflavin biosynthesis. Its function is as follows. Catalyzes the hydrolysis of the formamide of 2-amino-5-formylamino-6-ribosylamino-4(3H)-pyrimidinone 5'-monophosphate (FAPy) to form 2,5-diamino-6-ribosylamino-4(3H)-pyrimidinone 5'-phosphate (APy). The sequence is that of 2-amino-5-formylamino-6-ribosylaminopyrimidin-4(3H)-one 5'-monophosphate deformylase from Methanothermobacter marburgensis (strain ATCC BAA-927 / DSM 2133 / JCM 14651 / NBRC 100331 / OCM 82 / Marburg) (Methanobacterium thermoautotrophicum).